Here is a 292-residue protein sequence, read N- to C-terminus: Elongation factor Ts (292 aa).

The involved in Mg(2+) ion dislocation from EF-Tu stretch occupies residues 80-83 (TDFV).

The protein belongs to the EF-Ts family.

It localises to the cytoplasm. Its function is as follows. Associates with the EF-Tu.GDP complex and induces the exchange of GDP to GTP. It remains bound to the aminoacyl-tRNA.EF-Tu.GTP complex up to the GTP hydrolysis stage on the ribosome. The polypeptide is Elongation factor Ts (Pediococcus pentosaceus (strain ATCC 25745 / CCUG 21536 / LMG 10740 / 183-1w)).